The chain runs to 462 residues: Protoheme IX farnesyltransferase, mitochondrial (462 aa).

Helical transmembrane passes span 152-172, 173-193, 237-257, 269-289, 296-316, 348-368, and 411-431; these read LTILVTLSSICSYAISPYTVS, LPELLFLTMGTALCSGAANAI, MLFLGVNPTVSFLGFLNIVLY, IINTWVGAIVGAIPPLMGWAA, PGAWCLAGLLYAWQFPHFNAL, SLLMFPLCFGLSYFGITDWVF, and AKKLFWGSVWHLPAVLILAML.

It belongs to the UbiA prenyltransferase family.

The protein resides in the mitochondrion membrane. Converts protoheme IX and farnesyl diphosphate to heme O. This chain is Protoheme IX farnesyltransferase, mitochondrial (COX10), found in Debaryomyces hansenii (strain ATCC 36239 / CBS 767 / BCRC 21394 / JCM 1990 / NBRC 0083 / IGC 2968) (Yeast).